Reading from the N-terminus, the 318-residue chain is Ubiquitin-like domain-containing CTD phosphatase 1 (318 aa).

N-acetylalanine is present on Ala-2. In terms of domain architecture, Ubiquitin-like spans 3 to 81 (LPIIVKWGGQ…IMMMGTREES (79 aa)). Lys-117 is modified (N6-acetyllysine). In terms of domain architecture, FCP1 homology spans 133-294 (PREGKKLLVL…LKLTQYLKEI (162 aa)). Mg(2+) is bound by residues Asp-143, Asp-145, and Asp-253.

The cofactor is Mg(2+).

Its subcellular location is the nucleus. The enzyme catalyses O-phospho-L-seryl-[protein] + H2O = L-seryl-[protein] + phosphate. It carries out the reaction O-phospho-L-threonyl-[protein] + H2O = L-threonyl-[protein] + phosphate. In terms of biological role, dephosphorylates 26S nuclear proteasomes, thereby decreasing their proteolytic activity. Recruited to the 19S regulatory particle of the 26S proteasome through its interaction with 19S component PSMD2/RPN1. Once recruited, dephosphorylates 19S component PSMC2/RPT1 which impairs PSMC2 ATPase activity and disrupts 26S proteasome assembly. Has also been reported to stimulate the proteolytic activity of the 26S proteasome. The sequence is that of Ubiquitin-like domain-containing CTD phosphatase 1 (UBLCP1) from Pongo abelii (Sumatran orangutan).